The primary structure comprises 30 residues: Serum amyloid P-component (30 aa).

In terms of domain architecture, Pentraxin (PTX) spans 1-30 (APQDLSGKMFIFPQETSTANVXLTARSQDF).

It belongs to the pentraxin family. In terms of assembly, homopentamer. Discoid arrangement of 5 covalently bound subunits. It depends on Ca(2+) as a cofactor.

It localises to the secreted. The protein is Serum amyloid P-component of Anarhichas lupus (Atlantic wolffish).